A 378-amino-acid polypeptide reads, in one-letter code: Spermidine/putrescine import ATP-binding protein PotA (378 aa).

The 231-residue stretch at 18-248 (VQLAGIRKCF…PKNLFVAGFI (231 aa)) folds into the ABC transporter domain. ATP is bound at residue 50-57 (GPSGCGKT).

This sequence belongs to the ABC transporter superfamily. Spermidine/putrescine importer (TC 3.A.1.11.1) family. In terms of assembly, the complex is composed of two ATP-binding proteins (PotA), two transmembrane proteins (PotB and PotC) and a solute-binding protein (PotD).

It localises to the cell inner membrane. The enzyme catalyses ATP + H2O + polyamine-[polyamine-binding protein]Side 1 = ADP + phosphate + polyamineSide 2 + [polyamine-binding protein]Side 1.. Functionally, part of the ABC transporter complex PotABCD involved in spermidine/putrescine import. Responsible for energy coupling to the transport system. The chain is Spermidine/putrescine import ATP-binding protein PotA from Shigella flexneri.